Reading from the N-terminus, the 61-residue chain is Small ribosomal subunit protein bS21 (61 aa).

The segment at 40–61 (KPSVKRKKKSEAARKRKNKRRF) is disordered. A compositionally biased stretch (basic residues) spans 43 to 61 (VKRKKKSEAARKRKNKRRF).

This sequence belongs to the bacterial ribosomal protein bS21 family.

The protein is Small ribosomal subunit protein bS21 of Ligilactobacillus salivarius (strain UCC118) (Lactobacillus salivarius).